Reading from the N-terminus, the 141-residue chain is Endoribonuclease YbeY (141 aa).

Zn(2+) contacts are provided by His107, His111, and Asp117.

This sequence belongs to the endoribonuclease YbeY family. The cofactor is Zn(2+).

The protein resides in the cytoplasm. In terms of biological role, single strand-specific metallo-endoribonuclease involved in late-stage 70S ribosome quality control and in maturation of the 3' terminus of the 16S rRNA. The polypeptide is Endoribonuclease YbeY (Endomicrobium trichonymphae).